The chain runs to 91 residues: Large ribosomal subunit protein bL31 (91 aa).

The segment at 62-91 (RRKYSGTKPQQTAKGKKAAPKSTPKTNKKG) is disordered.

This sequence belongs to the bacterial ribosomal protein bL31 family. Type A subfamily. In terms of assembly, part of the 50S ribosomal subunit.

Functionally, binds the 23S rRNA. The chain is Large ribosomal subunit protein bL31 from Thermosynechococcus vestitus (strain NIES-2133 / IAM M-273 / BP-1).